A 374-amino-acid chain; its full sequence is Ribosomal RNA large subunit methyltransferase G (374 aa).

Belongs to the methyltransferase superfamily. RlmG family.

It localises to the cytoplasm. The catalysed reaction is guanosine(1835) in 23S rRNA + S-adenosyl-L-methionine = N(2)-methylguanosine(1835) in 23S rRNA + S-adenosyl-L-homocysteine + H(+). Functionally, specifically methylates the guanine in position 1835 (m2G1835) of 23S rRNA. The polypeptide is Ribosomal RNA large subunit methyltransferase G (Pseudomonas syringae pv. tomato (strain ATCC BAA-871 / DC3000)).